The following is a 430-amino-acid chain: 3-phosphoshikimate 1-carboxyvinyltransferase (430 aa).

3-phosphoshikimate is bound by residues lysine 21, serine 22, and arginine 26. Lysine 21 is a binding site for phosphoenolpyruvate. Residues glycine 94 and arginine 122 each coordinate phosphoenolpyruvate. 4 residues coordinate 3-phosphoshikimate: serine 168, glutamine 170, aspartate 315, and lysine 342. Glutamine 170 serves as a coordination point for phosphoenolpyruvate. Residue aspartate 315 is the Proton acceptor of the active site. Positions 346 and 389 each coordinate phosphoenolpyruvate.

It belongs to the EPSP synthase family. As to quaternary structure, monomer.

The protein localises to the cytoplasm. It carries out the reaction 3-phosphoshikimate + phosphoenolpyruvate = 5-O-(1-carboxyvinyl)-3-phosphoshikimate + phosphate. Its pathway is metabolic intermediate biosynthesis; chorismate biosynthesis; chorismate from D-erythrose 4-phosphate and phosphoenolpyruvate: step 6/7. Its function is as follows. Catalyzes the transfer of the enolpyruvyl moiety of phosphoenolpyruvate (PEP) to the 5-hydroxyl of shikimate-3-phosphate (S3P) to produce enolpyruvyl shikimate-3-phosphate and inorganic phosphate. This Salinibacter ruber (strain DSM 13855 / M31) protein is 3-phosphoshikimate 1-carboxyvinyltransferase.